Reading from the N-terminus, the 112-residue chain is MNYPKREKVVEVSLASGTYSVFPRRLGVTTNDAMSIVNGAMKGAELPMIPVHKLADRDSELTYVNAFQIQTATENIVDVPERITSLYTKPEDETPEDEEVRLGTINNYFSLR.

Its subcellular location is the virion. This Enterococcus phage phiEF24C (Enterococcus bacteriophage phi-EF24C) protein is Virion protein 6.